The following is a 338-amino-acid chain: Ketol-acid reductoisomerase (NADP(+)) (338 aa).

One can recognise a KARI N-terminal Rossmann domain in the interval 1 to 181 (MKVFYDKDCD…GGGRTGIIET (181 aa)). Residues 24–27 (YGSQ), arginine 47, serine 50, threonine 52, and 82–85 (DEFQ) contribute to the NADP(+) site. The active site involves histidine 107. Residue glycine 133 coordinates NADP(+). Positions 182 to 327 (TFKDETETDL…EQLRSMMPWI (146 aa)) constitute a KARI C-terminal knotted domain. 4 residues coordinate Mg(2+): aspartate 190, glutamate 194, glutamate 226, and glutamate 230. Serine 251 lines the substrate pocket.

The protein belongs to the ketol-acid reductoisomerase family. Mg(2+) is required as a cofactor.

It catalyses the reaction (2R)-2,3-dihydroxy-3-methylbutanoate + NADP(+) = (2S)-2-acetolactate + NADPH + H(+). It carries out the reaction (2R,3R)-2,3-dihydroxy-3-methylpentanoate + NADP(+) = (S)-2-ethyl-2-hydroxy-3-oxobutanoate + NADPH + H(+). It functions in the pathway amino-acid biosynthesis; L-isoleucine biosynthesis; L-isoleucine from 2-oxobutanoate: step 2/4. Its pathway is amino-acid biosynthesis; L-valine biosynthesis; L-valine from pyruvate: step 2/4. Functionally, involved in the biosynthesis of branched-chain amino acids (BCAA). Catalyzes an alkyl-migration followed by a ketol-acid reduction of (S)-2-acetolactate (S2AL) to yield (R)-2,3-dihydroxy-isovalerate. In the isomerase reaction, S2AL is rearranged via a Mg-dependent methyl migration to produce 3-hydroxy-3-methyl-2-ketobutyrate (HMKB). In the reductase reaction, this 2-ketoacid undergoes a metal-dependent reduction by NADPH to yield (R)-2,3-dihydroxy-isovalerate. The protein is Ketol-acid reductoisomerase (NADP(+)) of Pseudomonas putida (strain W619).